A 264-amino-acid polypeptide reads, in one-letter code: Thymidylate synthase (264 aa).

DUMP is bound at residue Arg21. His51 is a (6R)-5,10-methylene-5,6,7,8-tetrahydrofolate binding site. 126–127 lines the dUMP pocket; it reads RR. The active-site Nucleophile is the Cys146. Residues 166-169, Asn177, and 207-209 each bind dUMP; these read RSCD and HLY. Asp169 provides a ligand contact to (6R)-5,10-methylene-5,6,7,8-tetrahydrofolate. Ala263 serves as a coordination point for (6R)-5,10-methylene-5,6,7,8-tetrahydrofolate.

The protein belongs to the thymidylate synthase family. Bacterial-type ThyA subfamily. As to quaternary structure, homodimer.

It localises to the cytoplasm. The catalysed reaction is dUMP + (6R)-5,10-methylene-5,6,7,8-tetrahydrofolate = 7,8-dihydrofolate + dTMP. The protein operates within pyrimidine metabolism; dTTP biosynthesis. Its function is as follows. Catalyzes the reductive methylation of 2'-deoxyuridine-5'-monophosphate (dUMP) to 2'-deoxythymidine-5'-monophosphate (dTMP) while utilizing 5,10-methylenetetrahydrofolate (mTHF) as the methyl donor and reductant in the reaction, yielding dihydrofolate (DHF) as a by-product. This enzymatic reaction provides an intracellular de novo source of dTMP, an essential precursor for DNA biosynthesis. This is Thymidylate synthase from Sodalis glossinidius (strain morsitans).